The chain runs to 389 residues: tRNA (guanine-N(7)-)-methyltransferase non-catalytic subunit TRM82 (389 aa).

WD repeat units lie at residues 44-86 (QNVP…HQLK), 134-179 (GHTS…KGFL), and 184-222 (QFVS…LITE).

The protein belongs to the WD repeat TRM82 family. Forms a heterodimer with the catalytic subunit TRM8.

It localises to the nucleus. It participates in tRNA modification; N(7)-methylguanine-tRNA biosynthesis. Required for the formation of N(7)-methylguanine at position 46 (m7G46) in tRNA. In the complex, it is required to stabilize and induce conformational changes of the catalytic subunit. This chain is tRNA (guanine-N(7)-)-methyltransferase non-catalytic subunit TRM82, found in Lodderomyces elongisporus (strain ATCC 11503 / CBS 2605 / JCM 1781 / NBRC 1676 / NRRL YB-4239) (Yeast).